The chain runs to 108 residues: Nucleoid-associated protein HCH_02614 (108 aa).

Belongs to the YbaB/EbfC family. Homodimer.

The protein localises to the cytoplasm. Its subcellular location is the nucleoid. Its function is as follows. Binds to DNA and alters its conformation. May be involved in regulation of gene expression, nucleoid organization and DNA protection. This chain is Nucleoid-associated protein HCH_02614, found in Hahella chejuensis (strain KCTC 2396).